A 166-amino-acid polypeptide reads, in one-letter code: Regulatory protein RecX (166 aa).

The protein belongs to the RecX family.

The protein resides in the cytoplasm. In terms of biological role, modulates RecA activity. The polypeptide is Regulatory protein RecX (Salmonella choleraesuis (strain SC-B67)).